Reading from the N-terminus, the 376-residue chain is Lipid-A-disaccharide synthase (376 aa).

It belongs to the LpxB family.

It carries out the reaction a lipid X + a UDP-2-N,3-O-bis[(3R)-3-hydroxyacyl]-alpha-D-glucosamine = a lipid A disaccharide + UDP + H(+). The protein operates within bacterial outer membrane biogenesis; LPS lipid A biosynthesis. Its function is as follows. Condensation of UDP-2,3-diacylglucosamine and 2,3-diacylglucosamine-1-phosphate to form lipid A disaccharide, a precursor of lipid A, a phosphorylated glycolipid that anchors the lipopolysaccharide to the outer membrane of the cell. The sequence is that of Lipid-A-disaccharide synthase from Pseudomonas fluorescens (strain Pf0-1).